The following is a 1415-amino-acid chain: DNA-directed RNA polymerase subunit beta' (1415 aa).

Residues C214, C294, C301, and C304 each coordinate Zn(2+). Residues 1335–1351 (QNFVDSQGKPQSQSSFI) are compositionally biased toward polar residues. A disordered region spans residues 1335-1390 (QNFVDSQGKPQSQSSFIDDSMSEFSPVKDKSGSVLDDSDFPPGNFDSDFPADNYDL).

It belongs to the RNA polymerase beta' chain family. RpoC2 subfamily. In cyanobacteria the RNAP catalytic core is composed of 2 alpha, 1 beta, 1 beta', 1 gamma and 1 omega subunit. When a sigma factor is associated with the core the holoenzyme is formed, which can initiate transcription. The cofactor is Zn(2+).

The enzyme catalyses RNA(n) + a ribonucleoside 5'-triphosphate = RNA(n+1) + diphosphate. Functionally, DNA-dependent RNA polymerase catalyzes the transcription of DNA into RNA using the four ribonucleoside triphosphates as substrates. The protein is DNA-directed RNA polymerase subunit beta' of Trichodesmium erythraeum (strain IMS101).